A 405-amino-acid polypeptide reads, in one-letter code: Cytoplasmic polyadenylated homeobox-like protein (405 aa).

Disordered regions lie at residues 1 to 33 (MNLD…KHRH) and 340 to 363 (PWDL…QNNG). Positions 13 to 23 (EEDHHNEERQT) are enriched in basic and acidic residues. The span at 24–33 (KNKRKTKHRH) shows a compositional bias: basic residues. The segment at residues 28–87 (KTKHRHKFSEELLQELKEIFGENCYPDYTTRKTLAIKFDCPVNVIDNWFQNKRARLPPAE) is a DNA-binding region (homeobox). Over residues 346-360 (QWSSAQSQLQSQLPQ) the composition is skewed to low complexity.

The protein localises to the nucleus. Transcription factor that acts as activator. The sequence is that of Cytoplasmic polyadenylated homeobox-like protein from Homo sapiens (Human).